A 512-amino-acid polypeptide reads, in one-letter code: Histidine ammonia-lyase (512 aa).

A cross-link (5-imidazolinone (Cys-Gly)) is located at residues 143–145 (CSG). S144 carries the post-translational modification 2,3-didehydroalanine (Ser).

The protein belongs to the PAL/histidase family. In terms of processing, contains an active site 4-methylidene-imidazol-5-one (MIO), which is formed autocatalytically by cyclization and dehydration of residues Cys-Ser-Gly.

It localises to the cytoplasm. The catalysed reaction is L-histidine = trans-urocanate + NH4(+). It participates in amino-acid degradation; L-histidine degradation into L-glutamate; N-formimidoyl-L-glutamate from L-histidine: step 1/3. In Streptomyces avermitilis (strain ATCC 31267 / DSM 46492 / JCM 5070 / NBRC 14893 / NCIMB 12804 / NRRL 8165 / MA-4680), this protein is Histidine ammonia-lyase.